A 258-amino-acid chain; its full sequence is Putative [LysW]-aminoadipate/[LysW]-glutamate kinase (258 aa).

Substrate contacts are provided by residues 33-34, arginine 60, and asparagine 164; that span reads GG.

It belongs to the acetylglutamate kinase family. LysZ subfamily.

It is found in the cytoplasm. The catalysed reaction is [amino-group carrier protein]-C-terminal-N-(1,4-dicarboxybutan-1-yl)-L-glutamine + ATP = [amino-group carrier protein]-C-terminal-N-(1-carboxy-5-phosphooxy-5-oxopentan-1-yl)-L-glutamine + ADP. It carries out the reaction [amino-group carrier protein]-C-terminal-gamma-(L-glutamyl)-L-glutamate + ATP = [amino-group carrier protein]-C-terminal-gamma-(5-phospho-L-glutamyl)-L-glutamate + ADP. It functions in the pathway amino-acid biosynthesis; L-lysine biosynthesis via AAA pathway; L-lysine from L-alpha-aminoadipate (Thermus route): step 2/5. Its pathway is amino-acid biosynthesis; L-arginine biosynthesis. Involved in both the arginine and lysine biosynthetic pathways. Phosphorylates the LysW-bound precursors glutamate (for arginine biosynthesis), respectively alpha-aminoadipate (for lysine biosynthesis). The sequence is that of Putative [LysW]-aminoadipate/[LysW]-glutamate kinase from Caldivirga maquilingensis (strain ATCC 700844 / DSM 13496 / JCM 10307 / IC-167).